A 355-amino-acid polypeptide reads, in one-letter code: Elongation factor Ts (355 aa).

Residues 82 to 85 are involved in Mg(2+) ion dislocation from EF-Tu; the sequence is TDFV.

Belongs to the EF-Ts family.

The protein localises to the cytoplasm. In terms of biological role, associates with the EF-Tu.GDP complex and induces the exchange of GDP to GTP. It remains bound to the aminoacyl-tRNA.EF-Tu.GTP complex up to the GTP hydrolysis stage on the ribosome. The chain is Elongation factor Ts from Helicobacter pylori (strain HPAG1).